Consider the following 190-residue polypeptide: DNA dC-&gt;dU-editing enzyme APOBEC-3C (190 aa).

The CMP/dCMP-type deaminase domain maps to 29-138 (DRNETWLCFT…PCYQEGLRSL (110 aa)). The segment at 40-86 (EGIKRRSVVSWKTGVFRNQVDSETHCHAERCFLSWFCDDILSPNTKY) is (Microbial infection) Required for interaction with human foamy virus protein Bet. His-66 is a Zn(2+) binding site. Glu-68 functions as the Proton donor in the catalytic mechanism. Cys-97 and Cys-100 together coordinate Zn(2+).

Belongs to the cytidine and deoxycytidylate deaminase family. As to quaternary structure, homodimer. Interacts with TRIB3. Interacts with AGO2. In terms of assembly, (Microbial infection) Interacts with human foamy virus protein Bet; this interaction does not induce APOBEC3C degradation but prevents its dimerization and incorporation into the virion by binding of Bet close to or within the APOBEC3C dimerization site. (Microbial infection) Interacts with HIV-1 Vif. It depends on Zn(2+) as a cofactor. In terms of tissue distribution, expressed in spleen, testes, peripherical blood lymphocytes, heart, thymus, prostate and ovary.

The protein resides in the nucleus. The protein localises to the cytoplasm. The catalysed reaction is a 2'-deoxycytidine in single-stranded DNA + H2O + H(+) = a 2'-deoxyuridine in single-stranded DNA + NH4(+). With respect to regulation, (Microbial infection) Antiviral activity is neutralized by the HIV-1 virion infectivity factor (Vif), that prevents its incorporation into progeny HIV-1 virions by both inhibiting its translation and/or by inducing its ubiquitination and subsequent degradation by the 26S proteasome. Functionally, DNA deaminase (cytidine deaminase) which acts as an inhibitor of retrovirus replication and retrotransposon mobility via deaminase-dependent and -independent mechanisms. After the penetration of retroviral nucleocapsids into target cells of infection and the initiation of reverse transcription, it can induce the conversion of cytosine to uracil in the minus-sense single-strand viral DNA, leading to G-to-A hypermutations in the subsequent plus-strand viral DNA. The resultant detrimental levels of mutations in the proviral genome, along with a deamination-independent mechanism that works prior to the proviral integration, together exert efficient antiretroviral effects in infected target cells. Selectively targets single-stranded DNA and does not deaminate double-stranded DNA or single- or double-stranded RNA. Exhibits antiviral activity against simian immunodeficiency virus (SIV), hepatitis B virus (HBV), herpes simplex virus 1 (HHV-1) and Epstein-Barr virus (EBV) and may inhibit the mobility of LTR and non-LTR retrotransposons. May also play a role in the epigenetic regulation of gene expression through the process of active DNA demethylation. This is DNA dC-&gt;dU-editing enzyme APOBEC-3C (APOBEC3C) from Homo sapiens (Human).